Here is a 39-residue protein sequence, read N- to C-terminus: Basic phospholipase A2 (39 aa).

Tyrosine 27, glycine 29, and glycine 31 together coordinate Ca(2+).

This sequence belongs to the phospholipase A2 family. Group II subfamily. D49 sub-subfamily. Ca(2+) serves as cofactor. Expressed by the venom gland.

The protein resides in the secreted. The catalysed reaction is a 1,2-diacyl-sn-glycero-3-phosphocholine + H2O = a 1-acyl-sn-glycero-3-phosphocholine + a fatty acid + H(+). Its activity is regulated as follows. Is selectively inhibited by the gamma-phospholipase A2 inhibitor (PLI) CgMIP-I (AC P0DQP7) but not by the alpha-PLI CgMIP-II (AC P0DQP8). Functionally, snake venom phospholipase A2 (PLA2) that shows high myotoxic activities, induces mild edema, and shows cytolytic, and anti-coagulant activities, as well as intracerebral lethal effect. Does not induce lethality at a dose of 5 ug/g, when intravenously injected into mice. PLA2 catalyzes the calcium-dependent hydrolysis of the 2-acyl groups in 3-sn-phosphoglycerides. The chain is Basic phospholipase A2 from Cerrophidion godmani (Porthidium godmani).